The chain runs to 173 residues: MAIILGVDPGSRITGYGVIQCQGRQQLYLGSGCIRTSGEDLPLRLKQIFDGISEIIRQYQPDEFAIERVFLAKNADSALKLGQARGAAIVAATVANLPVAEYSATQIKNAVVGTGRAKKEQVQHMIQQLLKLPAAPQADAADALGVAVCHYHTNQSLVALSGRATTRTYGRYR.

Active-site residues include Asp8, Glu67, and Asp139. Mg(2+)-binding residues include Asp8, Glu67, and Asp139.

It belongs to the RuvC family. In terms of assembly, homodimer which binds Holliday junction (HJ) DNA. The HJ becomes 2-fold symmetrical on binding to RuvC with unstacked arms; it has a different conformation from HJ DNA in complex with RuvA. In the full resolvosome a probable DNA-RuvA(4)-RuvB(12)-RuvC(2) complex forms which resolves the HJ. Requires Mg(2+) as cofactor.

Its subcellular location is the cytoplasm. The catalysed reaction is Endonucleolytic cleavage at a junction such as a reciprocal single-stranded crossover between two homologous DNA duplexes (Holliday junction).. Functionally, the RuvA-RuvB-RuvC complex processes Holliday junction (HJ) DNA during genetic recombination and DNA repair. Endonuclease that resolves HJ intermediates. Cleaves cruciform DNA by making single-stranded nicks across the HJ at symmetrical positions within the homologous arms, yielding a 5'-phosphate and a 3'-hydroxyl group; requires a central core of homology in the junction. The consensus cleavage sequence is 5'-(A/T)TT(C/G)-3'. Cleavage occurs on the 3'-side of the TT dinucleotide at the point of strand exchange. HJ branch migration catalyzed by RuvA-RuvB allows RuvC to scan DNA until it finds its consensus sequence, where it cleaves and resolves the cruciform DNA. This Shewanella sp. (strain MR-4) protein is Crossover junction endodeoxyribonuclease RuvC.